The following is a 103-amino-acid chain: Large ribosomal subunit protein bL21 (103 aa).

The protein belongs to the bacterial ribosomal protein bL21 family. As to quaternary structure, part of the 50S ribosomal subunit. Contacts protein L20.

In terms of biological role, this protein binds to 23S rRNA in the presence of protein L20. This Haemophilus influenzae (strain 86-028NP) protein is Large ribosomal subunit protein bL21.